A 375-amino-acid polypeptide reads, in one-letter code: Succinyl-diaminopimelate desuccinylase (375 aa).

A Zn(2+)-binding site is contributed by histidine 66. The active site involves aspartate 68. Aspartate 99 serves as a coordination point for Zn(2+). Glutamate 133 acts as the Proton acceptor in catalysis. Residues glutamate 134, glutamate 162, and histidine 348 each contribute to the Zn(2+) site.

The protein belongs to the peptidase M20A family. DapE subfamily. In terms of assembly, homodimer. Zn(2+) serves as cofactor. It depends on Co(2+) as a cofactor.

It catalyses the reaction N-succinyl-(2S,6S)-2,6-diaminopimelate + H2O = (2S,6S)-2,6-diaminopimelate + succinate. It functions in the pathway amino-acid biosynthesis; L-lysine biosynthesis via DAP pathway; LL-2,6-diaminopimelate from (S)-tetrahydrodipicolinate (succinylase route): step 3/3. Functionally, catalyzes the hydrolysis of N-succinyl-L,L-diaminopimelic acid (SDAP), forming succinate and LL-2,6-diaminopimelate (DAP), an intermediate involved in the bacterial biosynthesis of lysine and meso-diaminopimelic acid, an essential component of bacterial cell walls. The polypeptide is Succinyl-diaminopimelate desuccinylase (Shigella boydii serotype 18 (strain CDC 3083-94 / BS512)).